A 1050-amino-acid chain; its full sequence is FHIP family protein GE18198 (1050 aa).

Residues serine 498 and serine 805 each carry the phosphoserine modification. Disordered stretches follow at residues 800–827, 865–888, 911–954, and 968–995; these read KGNEGSPMHHSQQQQMATNSGQQQGQLR, TSMFSRKSASNTSTTPPNGSSASS, TDGR…SGSN, and SNTTTHSASTLHGLDGGPSTGGFNSEPA. The segment covering 808–826 has biased composition (polar residues); sequence HHSQQQQMATNSGQQQGQL. The span at 872–888 shows a compositional bias: low complexity; the sequence is SASNTSTTPPNGSSASS. The segment covering 918-935 has biased composition (polar residues); sequence HAQTSAGTCETSLSTQPQ. Over residues 941–954 the composition is skewed to low complexity; sequence TGAIATSATASGSN. The span at 968-977 shows a compositional bias: polar residues; sequence SNTTTHSAST.

This sequence belongs to the FHIP family.

The polypeptide is FHIP family protein GE18198 (Drosophila yakuba (Fruit fly)).